Here is an 821-residue protein sequence, read N- to C-terminus: Serine/threonine-protein kinase CTR1 (821 aa).

Disordered regions lie at residues 1–76 and 481–502; these read MEMP…LNNQ and NPGG…PSAN. Over residues 14 to 25 the composition is skewed to low complexity; that stretch reads SQFSDDQVSVSV. The span at 35–49 shows a compositional bias: polar residues; sequence SLSSENRSNHNSGNT. In terms of domain architecture, Protein kinase spans 551-809; that stretch reads LNIKEKIGAG…TIMDLLRPLI (259 aa). ATP contacts are provided by residues 557–565 and lysine 578; that span reads IGAGSFGTV. The active-site Proton acceptor is the aspartate 676.

Belongs to the protein kinase superfamily. TKL Ser/Thr protein kinase family. RAF subfamily. As to quaternary structure, interacts with EIN2 (via C-terminus). In terms of tissue distribution, expressed in both seedlings and adult plants.

The enzyme catalyses L-seryl-[protein] + ATP = O-phospho-L-seryl-[protein] + ADP + H(+). The catalysed reaction is L-threonyl-[protein] + ATP = O-phospho-L-threonyl-[protein] + ADP + H(+). Its activity is regulated as follows. Kinase activity is inhibited by C24:1-ceramide during hypoxia (e.g. submergences). Its function is as follows. Acts as a negative regulator in the ethylene response pathway. Phosphorylates the cytosolic C-terminal domain of EIN2, preventing the signaling in the absence of ethylene. Interacts with C24:1-ceramide upon hypoxic conditions (e.g. submergences) to in turn regulate EIN2 endoplasmic reticulum (ER)-to-nucleus translocation and EIN3 stabilization. This chain is Serine/threonine-protein kinase CTR1, found in Arabidopsis thaliana (Mouse-ear cress).